The following is a 303-amino-acid chain: GMP synthase [glutamine-hydrolyzing] subunit B (303 aa).

The region spanning 1 to 183 (MDVEKFVENA…LGLPKEISER (183 aa)) is the GMPS ATP-PPase domain. 28–34 (SGGVDSS) contacts ATP.

As to quaternary structure, heterodimer composed of a glutamine amidotransferase subunit (A) and a GMP-binding subunit (B).

The enzyme catalyses XMP + L-glutamine + ATP + H2O = GMP + L-glutamate + AMP + diphosphate + 2 H(+). The protein operates within purine metabolism; GMP biosynthesis; GMP from XMP (L-Gln route): step 1/1. Functionally, catalyzes the synthesis of GMP from XMP. This chain is GMP synthase [glutamine-hydrolyzing] subunit B (guaAB), found in Archaeoglobus fulgidus (strain ATCC 49558 / DSM 4304 / JCM 9628 / NBRC 100126 / VC-16).